The primary structure comprises 272 residues: Bis(5'-nucleosyl)-tetraphosphatase, symmetrical (272 aa).

It belongs to the Ap4A hydrolase family.

It carries out the reaction P(1),P(4)-bis(5'-adenosyl) tetraphosphate + H2O = 2 ADP + 2 H(+). In terms of biological role, hydrolyzes diadenosine 5',5'''-P1,P4-tetraphosphate to yield ADP. The sequence is that of Bis(5'-nucleosyl)-tetraphosphatase, symmetrical from Shewanella frigidimarina (strain NCIMB 400).